We begin with the raw amino-acid sequence, 644 residues long: ATP-dependent zinc metalloprotease FtsH (644 aa).

The Cytoplasmic portion of the chain corresponds to 1-4; it reads MAKN. A helical transmembrane segment spans residues 5–25; it reads LILWLVIAVVLMSVFQSFGPS. Over 26–98 the chain is Periplasmic; that stretch reads ESNGRKVDYS…VGEPPEEPSL (73 aa). The helical transmembrane segment at 99 to 119 threads the bilayer; it reads LASIFISWFPMLLLIGVWIFF. The Cytoplasmic portion of the chain corresponds to 120-644; that stretch reads MRQMQGGGGK…NTMSEQLGDK (525 aa). ATP is bound at residue 192–199; it reads GPPGTGKT. A Zn(2+)-binding site is contributed by histidine 414. Residue glutamate 415 is part of the active site. 2 residues coordinate Zn(2+): histidine 418 and aspartate 492. The tract at residues 598 to 644 is disordered; that stretch reads VRPPAGWEEPGASNNAGDNGSPKAPRPVDEPRTPNPGNTMSEQLGDK. A compositionally biased stretch (polar residues) spans 632–644; that stretch reads NPGNTMSEQLGDK.

This sequence in the central section; belongs to the AAA ATPase family. The protein in the C-terminal section; belongs to the peptidase M41 family. As to quaternary structure, homohexamer. It depends on Zn(2+) as a cofactor.

The protein localises to the cell inner membrane. Its function is as follows. Acts as a processive, ATP-dependent zinc metallopeptidase for both cytoplasmic and membrane proteins. Plays a role in the quality control of integral membrane proteins. The chain is ATP-dependent zinc metalloprotease FtsH from Escherichia coli O157:H7.